The following is a 157-amino-acid chain: Regenerating islet-derived protein 4 (157 aa).

A signal peptide spans 1 to 22 (MASKGVRLLLLLSWVAGPEVLS). A disulfide bridge links Cys29 with Cys40. Residues 36 to 154 (YRSHCYGYFR…CANRQHFLCK (119 aa)) form the C-type lectin domain. N-linked (GlcNAc...) asparagine glycans are attached at residues Asn49 and Asn62. Intrachain disulfides connect Cys57/Cys153 and Cys128/Cys145. A carbohydrate is bound by residues 97–102 (DPQKKQ) and 134–136 (KDK).

Its subcellular location is the secreted. In terms of biological role, calcium-independent lectin displaying mannose-binding specificity and able to maintain carbohydrate recognition activity in an acidic environment. May be involved in inflammatory and metaplastic responses of the gastrointestinal epithelium. The protein is Regenerating islet-derived protein 4 (Reg4) of Mus musculus (Mouse).